A 276-amino-acid polypeptide reads, in one-letter code: Large ribosomal subunit protein uL2 (276 aa).

The tract at residues 221-276 is disordered; the sequence is RGSAMNPNDHPHGGGEGRAPIGRKSPMTPWGKKARGVKTRDRKKASNALIIRRRTK. Positions 252-276 are enriched in basic residues; sequence KKARGVKTRDRKKASNALIIRRRTK.

The protein belongs to the universal ribosomal protein uL2 family. Part of the 50S ribosomal subunit. Forms a bridge to the 30S subunit in the 70S ribosome.

In terms of biological role, one of the primary rRNA binding proteins. Required for association of the 30S and 50S subunits to form the 70S ribosome, for tRNA binding and peptide bond formation. It has been suggested to have peptidyltransferase activity; this is somewhat controversial. Makes several contacts with the 16S rRNA in the 70S ribosome. The chain is Large ribosomal subunit protein uL2 from Aster yellows phytoplasma.